Consider the following 282-residue polypeptide: 2-dehydro-3-deoxyphosphooctonate aldolase (282 aa).

It belongs to the KdsA family.

The protein resides in the cytoplasm. The enzyme catalyses D-arabinose 5-phosphate + phosphoenolpyruvate + H2O = 3-deoxy-alpha-D-manno-2-octulosonate-8-phosphate + phosphate. Its pathway is carbohydrate biosynthesis; 3-deoxy-D-manno-octulosonate biosynthesis; 3-deoxy-D-manno-octulosonate from D-ribulose 5-phosphate: step 2/3. It participates in bacterial outer membrane biogenesis; lipopolysaccharide biosynthesis. The chain is 2-dehydro-3-deoxyphosphooctonate aldolase from Bradyrhizobium diazoefficiens (strain JCM 10833 / BCRC 13528 / IAM 13628 / NBRC 14792 / USDA 110).